Consider the following 62-residue polypeptide: DNA-directed RNA polymerase subunit Rpo10 (62 aa).

Positions 6, 9, 43, and 44 each coordinate Zn(2+).

Belongs to the archaeal Rpo10/eukaryotic RPB10 RNA polymerase subunit family. Part of the RNA polymerase complex. It depends on Zn(2+) as a cofactor.

The protein localises to the cytoplasm. The enzyme catalyses RNA(n) + a ribonucleoside 5'-triphosphate = RNA(n+1) + diphosphate. Its function is as follows. DNA-dependent RNA polymerase (RNAP) catalyzes the transcription of DNA into RNA using the four ribonucleoside triphosphates as substrates. The chain is DNA-directed RNA polymerase subunit Rpo10 from Methanoculleus marisnigri (strain ATCC 35101 / DSM 1498 / JR1).